Here is a 284-residue protein sequence, read N- to C-terminus: Bifunctional protein FolD (284 aa).

Residues 165-167, Ser-190, and Val-231 contribute to the NADP(+) site; that span reads GRS.

This sequence belongs to the tetrahydrofolate dehydrogenase/cyclohydrolase family. Homodimer.

It catalyses the reaction (6R)-5,10-methylene-5,6,7,8-tetrahydrofolate + NADP(+) = (6R)-5,10-methenyltetrahydrofolate + NADPH. The enzyme catalyses (6R)-5,10-methenyltetrahydrofolate + H2O = (6R)-10-formyltetrahydrofolate + H(+). It participates in one-carbon metabolism; tetrahydrofolate interconversion. Catalyzes the oxidation of 5,10-methylenetetrahydrofolate to 5,10-methenyltetrahydrofolate and then the hydrolysis of 5,10-methenyltetrahydrofolate to 10-formyltetrahydrofolate. This Natranaerobius thermophilus (strain ATCC BAA-1301 / DSM 18059 / JW/NM-WN-LF) protein is Bifunctional protein FolD.